The following is a 37-amino-acid chain: Kappa-actitoxin-Bgr1a (37 aa).

The ShKT domain occupies 2-37 (CRDWFKETACRHAKSLGNCRTSQKYRANCAKTCELC). 3 cysteine pairs are disulfide-bonded: C2–C37, C11–C30, and C20–C34. The tract at residues 25-26 (KY) is crucial for binding to potassium channels.

This sequence belongs to the sea anemone type 1 potassium channel toxin family. Type 1b subfamily.

It is found in the secreted. The protein localises to the nematocyst. Inhibits voltage-dependent potassium channels of the Kv1 family (Kv1.1/KCNA1 (Kd=6 nM), Kv1.2/KCNA2 (Kd=15 nM), Kv1.3/KCNA3 (Kd=10-39 nM), Kv1.6/KCNA6, and KCa3.1/KCNN4 (Kd=172 nM)). The sequence is that of Kappa-actitoxin-Bgr1a from Bunodosoma granuliferum (Red warty sea anemone).